Consider the following 464-residue polypeptide: Pup--protein ligase (464 aa).

E14 contacts Mg(2+). R58 serves as a coordination point for ATP. Y60 contributes to the Mg(2+) binding site. D62 acts as the Proton acceptor in catalysis. E68 serves as a coordination point for Mg(2+). Positions 71 and 430 each coordinate ATP.

It belongs to the Pup ligase/Pup deamidase family. Pup-conjugating enzyme subfamily.

The catalysed reaction is ATP + [prokaryotic ubiquitin-like protein]-L-glutamate + [protein]-L-lysine = ADP + phosphate + N(6)-([prokaryotic ubiquitin-like protein]-gamma-L-glutamyl)-[protein]-L-lysine.. It functions in the pathway protein degradation; proteasomal Pup-dependent pathway. Its pathway is protein modification; protein pupylation. In terms of biological role, catalyzes the covalent attachment of the prokaryotic ubiquitin-like protein modifier Pup to the proteasomal substrate proteins, thereby targeting them for proteasomal degradation. This tagging system is termed pupylation. The ligation reaction involves the side-chain carboxylate of the C-terminal glutamate of Pup and the side-chain amino group of a substrate lysine. The protein is Pup--protein ligase of Micrococcus luteus (strain ATCC 4698 / DSM 20030 / JCM 1464 / CCM 169 / CCUG 5858 / IAM 1056 / NBRC 3333 / NCIMB 9278 / NCTC 2665 / VKM Ac-2230) (Micrococcus lysodeikticus).